The following is a 249-amino-acid chain: Cyclin-dependent kinase inhibitor 2 (249 aa).

The segment at 118–180 (KVCTQAGEDH…MCRRSSTTSA (63 aa)) is disordered. A compositionally biased stretch (polar residues) spans 161 to 180 (AESNQEAKQQMCRRSSTTSA).

The protein belongs to the CDI family. ICK/KRP subfamily.

The polypeptide is Cyclin-dependent kinase inhibitor 2 (KRP2) (Oryza sativa subsp. japonica (Rice)).